Consider the following 305-residue polypeptide: MSVLSPARLTHLQRLEAESIHILREVAAECENPVMLYSIGKDSAVMLHLAAKAFYPSRPPFPLLHVDTTWKFRAMYELRDKVASDLGFDLLVHKNPEAEARGINPFDHGSALHTDLWKTEGLKQALAKYGFDAAFGGARRDEEKSRAKERVFSFRTTEQRWDPKDQRPELWKLYNTRKHPGESLRVFPISNWTELDVWQYIHLENIPIVPLYFAAERPVVARDGSLIMVDDDRFRLRPGEVPQMKSVRFRTLGCYPLTGAVESTAATLPQVIQEMLLTTTSERQGRVIDHDQSASMEKKKQEGYF.

The interval 283–305 is disordered; it reads RQGRVIDHDQSASMEKKKQEGYF.

The protein belongs to the PAPS reductase family. CysD subfamily. Heterodimer composed of CysD, the smaller subunit, and CysN.

It catalyses the reaction sulfate + ATP + H(+) = adenosine 5'-phosphosulfate + diphosphate. Its pathway is sulfur metabolism; hydrogen sulfide biosynthesis; sulfite from sulfate: step 1/3. Functionally, with CysN forms the ATP sulfurylase (ATPS) that catalyzes the adenylation of sulfate producing adenosine 5'-phosphosulfate (APS) and diphosphate, the first enzymatic step in sulfur assimilation pathway. APS synthesis involves the formation of a high-energy phosphoric-sulfuric acid anhydride bond driven by GTP hydrolysis by CysN coupled to ATP hydrolysis by CysD. The protein is Sulfate adenylyltransferase subunit 2 of Caulobacter sp. (strain K31).